The following is a 454-amino-acid chain: L-cysteine desulfhydrase (454 aa).

Positions 1–25 are disordered; the sequence is MEAGERRNGDSMSHNHRAPKKPRLA. The segment covering 14-23 has biased composition (basic residues); the sequence is HNHRAPKKPR. Lys-257 is modified (N6-(pyridoxal phosphate)lysine).

Belongs to the class-V pyridoxal-phosphate-dependent aminotransferase family. Requires pyridoxal 5'-phosphate as cofactor. As to expression, highly expressed in stems and cauline leaves, and at lower levels in roots, rosette leaves and flowers.

It carries out the reaction L-cysteine + H2O = hydrogen sulfide + pyruvate + NH4(+) + H(+). Functionally, catalyzes the production of hydrogen sulfide (H2S) from cysteine. Is mainly responsible for the degradation of cysteine to generate H2S, a regulator of stomatal movement and closure. The sequence is that of L-cysteine desulfhydrase (LCD) from Arabidopsis thaliana (Mouse-ear cress).